The primary structure comprises 69 residues: MARVTVEDCLEKVDNRFLLVMLASKRVKQLFKGAKPLIDNRAGNKNVVLALREIAAGKVNFEISGRKSR.

It belongs to the RNA polymerase subunit omega family. As to quaternary structure, the RNAP catalytic core consists of 2 alpha, 1 beta, 1 beta' and 1 omega subunit. When a sigma factor is associated with the core the holoenzyme is formed, which can initiate transcription.

It carries out the reaction RNA(n) + a ribonucleoside 5'-triphosphate = RNA(n+1) + diphosphate. Its function is as follows. Promotes RNA polymerase assembly. Latches the N- and C-terminal regions of the beta' subunit thereby facilitating its interaction with the beta and alpha subunits. The sequence is that of DNA-directed RNA polymerase subunit omega from Geotalea uraniireducens (strain Rf4) (Geobacter uraniireducens).